We begin with the raw amino-acid sequence, 285 residues long: ATP phosphoribosyltransferase (285 aa).

It belongs to the ATP phosphoribosyltransferase family. Long subfamily. It depends on Mg(2+) as a cofactor.

Its subcellular location is the cytoplasm. It catalyses the reaction 1-(5-phospho-beta-D-ribosyl)-ATP + diphosphate = 5-phospho-alpha-D-ribose 1-diphosphate + ATP. Its pathway is amino-acid biosynthesis; L-histidine biosynthesis; L-histidine from 5-phospho-alpha-D-ribose 1-diphosphate: step 1/9. With respect to regulation, feedback inhibited by histidine. Catalyzes the condensation of ATP and 5-phosphoribose 1-diphosphate to form N'-(5'-phosphoribosyl)-ATP (PR-ATP). Has a crucial role in the pathway because the rate of histidine biosynthesis seems to be controlled primarily by regulation of HisG enzymatic activity. This Metallosphaera sedula (strain ATCC 51363 / DSM 5348 / JCM 9185 / NBRC 15509 / TH2) protein is ATP phosphoribosyltransferase.